Consider the following 430-residue polypeptide: Adenylosuccinate synthetase (430 aa).

GTP is bound by residues 12-18 (GDEGKGK) and 40-42 (GHT). Asp-13 acts as the Proton acceptor in catalysis. Asp-13 and Gly-40 together coordinate Mg(2+). IMP is bound by residues 13 to 16 (DEGK), 38 to 41 (NAGH), Thr-130, Arg-144, Gln-224, and Thr-239. His-41 functions as the Proton donor in the catalytic mechanism. A disordered region spans residues 277–298 (PFPTEQDNETGRKIGERGREFG). The segment covering 285-296 (ETGRKIGERGRE) has biased composition (basic and acidic residues). Substrate is bound at residue 299-305 (TNTGRPR). IMP is bound at residue Arg-303. GTP contacts are provided by residues Arg-305, 331–333 (KLD), and 413–415 (STS).

The protein belongs to the adenylosuccinate synthetase family. Homodimer. It depends on Mg(2+) as a cofactor.

The protein localises to the cytoplasm. The enzyme catalyses IMP + L-aspartate + GTP = N(6)-(1,2-dicarboxyethyl)-AMP + GDP + phosphate + 2 H(+). The protein operates within purine metabolism; AMP biosynthesis via de novo pathway; AMP from IMP: step 1/2. Its function is as follows. Plays an important role in the de novo pathway of purine nucleotide biosynthesis. Catalyzes the first committed step in the biosynthesis of AMP from IMP. This Bradyrhizobium sp. (strain BTAi1 / ATCC BAA-1182) protein is Adenylosuccinate synthetase.